Here is a 284-residue protein sequence, read N- to C-terminus: Bifunctional protein FolD (284 aa).

NADP(+) contacts are provided by residues 165–167 (GRS) and Ser190.

It belongs to the tetrahydrofolate dehydrogenase/cyclohydrolase family. Homodimer.

It carries out the reaction (6R)-5,10-methylene-5,6,7,8-tetrahydrofolate + NADP(+) = (6R)-5,10-methenyltetrahydrofolate + NADPH. The enzyme catalyses (6R)-5,10-methenyltetrahydrofolate + H2O = (6R)-10-formyltetrahydrofolate + H(+). The protein operates within one-carbon metabolism; tetrahydrofolate interconversion. Functionally, catalyzes the oxidation of 5,10-methylenetetrahydrofolate to 5,10-methenyltetrahydrofolate and then the hydrolysis of 5,10-methenyltetrahydrofolate to 10-formyltetrahydrofolate. The chain is Bifunctional protein FolD from Streptococcus equi subsp. zooepidemicus (strain H70).